The sequence spans 116 residues: MTDQADAAMPIKFTDAAAAKVKGLLEEEQNPALKLRVYVTGGGCSGFQYGFTFDEKVNEGDFTVEKQGVQLVVDPMSLQYLVGGEVDYTSGLEGSRFFVKNPNATTTCGCGASFSV.

The iron-sulfur cluster site is built by cysteine 44, cysteine 108, and cysteine 110.

The protein belongs to the HesB/IscA family. Homodimer. The cofactor is iron-sulfur cluster.

Required for insertion of 4Fe-4S clusters for at least IspG. The protein is Iron-sulfur cluster insertion protein ErpA of Shewanella sp. (strain ANA-3).